Consider the following 299-residue polypeptide: Putative peptidyl-prolyl cis-trans isomerase HP_0175 (299 aa).

The signal sequence occupies residues 1–21; that stretch reads MKKNILNLALVGALSTSFLMA. The PpiC domain maps to 154 to 253; it reads KQEAHARHIL…FGYHIIYLIS (100 aa).

It carries out the reaction [protein]-peptidylproline (omega=180) = [protein]-peptidylproline (omega=0). The protein is Putative peptidyl-prolyl cis-trans isomerase HP_0175 of Helicobacter pylori (strain ATCC 700392 / 26695) (Campylobacter pylori).